A 295-amino-acid chain; its full sequence is Acetylglutamate kinase (295 aa).

Residues 64-65 (GG), Arg86, and Asn179 contribute to the substrate site.

It belongs to the acetylglutamate kinase family. ArgB subfamily.

It localises to the cytoplasm. It carries out the reaction N-acetyl-L-glutamate + ATP = N-acetyl-L-glutamyl 5-phosphate + ADP. The protein operates within amino-acid biosynthesis; L-arginine biosynthesis; N(2)-acetyl-L-ornithine from L-glutamate: step 2/4. Its function is as follows. Catalyzes the ATP-dependent phosphorylation of N-acetyl-L-glutamate. The protein is Acetylglutamate kinase of Thermosynechococcus vestitus (strain NIES-2133 / IAM M-273 / BP-1).